The sequence spans 119 residues: Large ribosomal subunit protein bL20 (119 aa).

Belongs to the bacterial ribosomal protein bL20 family.

Its function is as follows. Binds directly to 23S ribosomal RNA and is necessary for the in vitro assembly process of the 50S ribosomal subunit. It is not involved in the protein synthesizing functions of that subunit. This Metamycoplasma arthritidis (strain 158L3-1) (Mycoplasma arthritidis) protein is Large ribosomal subunit protein bL20.